A 99-amino-acid chain; its full sequence is Acylphosphatase-1 (99 aa).

A2 is modified (N-acetylalanine). The region spanning 9-99 (SVDYEIFGKV…LDYSDFQIVK (91 aa)) is the Acylphosphatase-like domain. Residues R24 and N42 contribute to the active site.

Belongs to the acylphosphatase family.

It catalyses the reaction an acyl phosphate + H2O = a carboxylate + phosphate + H(+). The protein is Acylphosphatase-1 (Acyp1) of Mus musculus (Mouse).